The primary structure comprises 561 residues: Probable oligo-1,6-glucosidase 2 (561 aa).

The Nucleophile role is filled by Asp-199. The Proton donor role is filled by Glu-255.

Belongs to the glycosyl hydrolase 13 family.

Its subcellular location is the cytoplasm. The enzyme catalyses Hydrolysis of (1-&gt;6)-alpha-D-glucosidic linkages in some oligosaccharides produced from starch and glycogen by alpha-amylase, and in isomaltose.. The sequence is that of Probable oligo-1,6-glucosidase 2 (ycdG) from Bacillus subtilis (strain 168).